Here is a 168-residue protein sequence, read N- to C-terminus: Cell division inhibitor SulA (168 aa).

A ftsZ binding region spans residues 105–111 (ALQTGNY).

It belongs to the SulA family. Interacts with FtsZ. In terms of processing, is rapidly cleaved and degraded by the Lon protease once DNA damage is repaired.

In terms of biological role, component of the SOS system and an inhibitor of cell division. Accumulation of SulA causes rapid cessation of cell division and the appearance of long, non-septate filaments. In the presence of GTP, binds a polymerization-competent form of FtsZ in a 1:1 ratio, thus inhibiting FtsZ polymerization and therefore preventing it from participating in the assembly of the Z ring. This mechanism prevents the premature segregation of damaged DNA to daughter cells during cell division. The sequence is that of Cell division inhibitor SulA from Erwinia pyrifoliae (strain DSM 12163 / CIP 106111 / Ep16/96).